A 320-amino-acid polypeptide reads, in one-letter code: Epoxidase atD (320 aa).

N-linked (GlcNAc...) asparagine glycosylation is found at Asn245 and Asn299.

It functions in the pathway secondary metabolite biosynthesis. Epoxidase; part of the gene cluster that mediates the biosynthesis of terreic acid, a quinone epoxide inhibitor of Bruton's tyrosine kinase. The first step of the pathway is the synthesis of 6-methylsalicylic acid (6-MSA) by the 6-methylsalicylic acid synthase atX. In the biosynthesis of 6-MSA, atX utilizes one acetyl-CoA and three malonyl-CoAs as its substrates and catalyzes a series of programmed reactions including Claisen condensation, reduction, aldol cyclization, and the hydrolytic cleavage that yields 6-MSA. The 6-methylsalicylate 1-monooxygenase atA then catalyzes the decarboxylative hydroxylation of 6-MSA to 3-methylcatechol. The next step is the conversion of 3-methylcatechol to 3-methyl-1,2,4-benzenetriol by cytochrome P450 monooxygenase atE, which is enhanced by cytochrome P450 monooxygenase atG. Then, the epoxidase atD catalyzes the epoxidation and hydroxyl oxidation of 3-methyl-1,2,4-benzenetriol to terremutin. Lastly, GMC oxidoreductase atC oxidizes terremutin to terreic acid. In Aspergillus terreus (strain NIH 2624 / FGSC A1156), this protein is Epoxidase atD.